Consider the following 337-residue polypeptide: Tryptophan--tRNA ligase (337 aa).

Residues 11–13 and 19–20 contribute to the ATP site; these read QPT and GN. Positions 12–20 match the 'HIGH' region motif; the sequence is PTGALHLGN. An L-tryptophan-binding site is contributed by Asp-135. ATP-binding positions include 147–149, Val-191, and 200–204; these read GED and KMSKS. Residues 200-204 carry the 'KMSKS' region motif; it reads KMSKS.

This sequence belongs to the class-I aminoacyl-tRNA synthetase family. In terms of assembly, homodimer.

The protein localises to the cytoplasm. The catalysed reaction is tRNA(Trp) + L-tryptophan + ATP = L-tryptophyl-tRNA(Trp) + AMP + diphosphate + H(+). In terms of biological role, catalyzes the attachment of tryptophan to tRNA(Trp). This Prochlorococcus marinus (strain MIT 9313) protein is Tryptophan--tRNA ligase.